The following is a 129-amino-acid chain: Iron-sulfur cluster assembly 1 homolog, mitochondrial (129 aa).

A mitochondrion-targeting transit peptide spans 1-12 (MSASIARATVRA). Residues Cys57, Cys121, and Cys123 each contribute to the Fe cation site.

Belongs to the HesB/IscA family.

The protein localises to the mitochondrion. Its function is as follows. Involved in the maturation of mitochondrial 4Fe-4S proteins functioning late in the iron-sulfur cluster assembly pathway. Probably involved in the binding of an intermediate of Fe/S cluster assembly. The protein is Iron-sulfur cluster assembly 1 homolog, mitochondrial (isca1) of Danio rerio (Zebrafish).